Reading from the N-terminus, the 1125-residue chain is RGS domain-containing serine/threonine-protein kinase A (1125 aa).

4 disordered regions span residues 1–77 (MKTS…GGNK), 96–191 (RRNS…IVDD), 276–416 (GISP…NNTN), and 455–480 (YVGG…PAPE). Composition is skewed to low complexity over residues 7-30 (SSNS…NNNN) and 37-66 (SSKS…LSSG). Positions 121–136 (LDSKPPKPFDEKDDPI) are enriched in basic and acidic residues. Composition is skewed to low complexity over residues 159–191 (QPQQ…IVDD) and 281–342 (NNNN…LNNS). Residues 343–361 (PRYLNSSSSPRSMQHLSSK) show a composition bias toward polar residues. The segment covering 362–416 (ITTTTTTTTTTTTTTSDDNNGNTNNNISNNNNIINNSNNNSNSNNNNNNNINNTN) has biased composition (low complexity). One can recognise an RGS domain in the interval 487-603 (KFIETITDPT…ISSPFNPEWK (117 aa)). The segment covering 617–685 (TTTQPINNFN…NNSNGSNTSS (69 aa)) has biased composition (low complexity). Disordered stretches follow at residues 617-710 (TTTQ…KERS) and 723-762 (NLSN…SNNN). Over residues 690-710 (ERLDNIKGNRERVDSNGKERS) the composition is skewed to basic and acidic residues. The span at 723-735 (NLSNHSNSSSNSN) shows a compositional bias: low complexity. Positions 736–748 (GKDKDKDKDKNEN) are enriched in basic and acidic residues. The segment covering 749 to 762 (TTDNSNNNNNSNNN) has biased composition (low complexity). One can recognise a Protein kinase domain in the interval 842 to 1097 (VSIHKWIASG…YLESIIYPSV (256 aa)). Residues 848 to 856 (IASGSSGRV) and Lys869 each bind ATP. Asp963 acts as the Proton acceptor in catalysis.

This sequence belongs to the protein kinase superfamily. TKL Ser/Thr protein kinase family. Autophosphorylated.

The protein localises to the cytoplasm. It localises to the cell membrane. It carries out the reaction L-seryl-[protein] + ATP = O-phospho-L-seryl-[protein] + ADP + H(+). The catalysed reaction is L-threonyl-[protein] + ATP = O-phospho-L-threonyl-[protein] + ADP + H(+). Its activity is regulated as follows. Up-regulated by cAMP. In terms of biological role, serine/threonine kinase involved in negative regulation of chemotaxis. The chain is RGS domain-containing serine/threonine-protein kinase A (rckA) from Dictyostelium discoideum (Social amoeba).